The primary structure comprises 1338 residues: MWGRKRPNSSGETRGILSGNRGVDYGSGRGQSGPFEGRWRKLPKMPEAVGTDPSTSRKMAELEEVTLDGKPLQALRVTDLKAALEQRGLAKSGQKSALVKRLKGALMLENLQKHSTPHAAFQPNSQIGEEMSQNSFIKQYLEKQQELLRQRLEREAREAAELEEASAESEDEMTHPEGVASLLPPDFQSSLNRPELELSTHSPRKSSSFSEEKGESDDEKPRKGERRSSRVRQAKSKLPEYSQTAEEEEDQETPSRNLRVRADRNLKIEEEEEEEEEEEDDDDEEEEEVDEAQKSREAEAPTLKQFEDEEGEERTRAKPEKVVDEKPLNIRSQEKGELEKGGRVTRSQEEARRSHLARQQQEKETQIVSLPQEENEVKSSQSLEEKSQSPSPPPLPEDLEKAPVVLQPEQIVSEEETPPPLLTKEASSPPTHIQLQEEMEPVEGPAPPVLIQLSPPNTDAGAREPLASPHPAQLLRSLSPLSGTTDTKAESPAGRVSDESVLPLAQKSSLPECSTQKGVESEREKSAPLPLTVEEFAPAKGITEEPMKKQSLEQKEGRRASHALFPEHSGKQSADSSSSRSSSPSSSSSPSRSPSPDSVASRPQSSPGSKQRDGAQARVHANPHERPKMGSRSTSESRSRSRSRSRSASSSSRKSLSPGVSRDSNTSYTETKDPSCGQEAAAPSGPQLQVLEPKEKAPTFSASVRGRHLSHPEPEQQHVIQRLQPEQGSPKKCEAEEAEPPAATQPQTSETQISHLLESERTHHTVEEKEEVTMDTSENRPENEVPEPPLPVADQVSNDERPEGGAEEEEKKESSMPKSFKRKISVVSATKGVQAGNSDTEGGQPGRKRRWGASTAATQKKPSISITTESLKSLIPDIKPLAGQEAVVDLHADDSRISEDETERNGDDGTHDKGLKICRTVTQVVPAEGQENGQREEEEEKEPEAELPAPPQVSVEVALPPPVEHEVKKVTLGDTLTRRSISQQKSGVSITIDDPVRTAQVPSPPRGKISNIVHISNLVRPFTLGQLKELLGRTGTLVEEAFWIDKIKSHCFVTYSTVEEAVATRTALHGVKWPQSNPKFLCADYAEQDELDYHRGLLVDRPSETKAEEQGAPRPLHPPPPPPVQPPPHPRAEQREQERAVREQWAEREREMERRERTRSEREWDRDKVREGPRSRSRSRDRRRKERAKSKEKKSEKKEKAQEEPPAKLLDDLFRKTKAAPCIYWLPLTESQIVQKEAEQAERAKEREKRRKEREEEEQKEREKEAERERNRQLEREKRREHSRERERDRERERDRGDRERERERDRDRGRERDRRDTKRHSRSRSRSTPVRDRGGRR.

The segment at 1–57 (MWGRKRPNSSGETRGILSGNRGVDYGSGRGQSGPFEGRWRKLPKMPEAVGTDPSTSR) is disordered. Residues 72-106 (LQALRVTDLKAALEQRGLAKSGQKSALVKRLKGAL) form the SAP domain. Residues Ser-132, Ser-166, Ser-169, Ser-208, Ser-210, and Ser-216 each carry the phosphoserine modification. A disordered region spans residues 155–866 (EAREAAELEE…ATQKKPSISI (712 aa)). Residues 161 to 171 (ELEEASAESED) show a composition bias toward acidic residues. A compositionally biased stretch (basic and acidic residues) spans 219–228 (EKPRKGERRS). Phosphoserine is present on Ser-242. The residue at position 253 (Thr-253) is a Phosphothreonine. Lys-267 is covalently cross-linked (Glycyl lysine isopeptide (Lys-Gly) (interchain with G-Cter in SUMO1)). The segment covering 269–290 (EEEEEEEEEEEDDDDEEEEEVD) has biased composition (acidic residues). Ser-295 bears the Phosphoserine mark. The segment covering 313–353 (ERTRAKPEKVVDEKPLNIRSQEKGELEKGGRVTRSQEEARR) has biased composition (basic and acidic residues). Lys-318 is covalently cross-linked (Glycyl lysine isopeptide (Lys-Gly) (interchain with G-Cter in SUMO2)). Phosphoserine occurs at positions 332 and 369. Lys-378 is covalently cross-linked (Glycyl lysine isopeptide (Lys-Gly) (interchain with G-Cter in SUMO2)). Phosphoserine is present on residues Ser-387, Ser-389, Ser-391, and Ser-413. Phosphothreonine occurs at positions 417 and 423. Polar residues predominate over residues 425–434 (EASSPPTHIQ). 5 positions are modified to phosphoserine: Ser-454, Ser-477, Ser-479, Ser-491, and Ser-497. Over residues 506 to 518 (QKSSLPECSTQKG) the composition is skewed to polar residues. Positions 542–559 (ITEEPMKKQSLEQKEGRR) are enriched in basic and acidic residues. Position 561 is a phosphoserine (Ser-561). 2 stretches are compositionally biased toward low complexity: residues 573–603 (SADSSSSRSSSPSSSSSPSRSPSPDSVASRP) and 646–662 (RSASSSSRKSLSPGVSR). Lys-654 is subject to N6,N6,N6-trimethyllysine; by EHMT2; alternate. Lys-654 carries the post-translational modification N6,N6-dimethyllysine; by EHMT2; alternate. 4 positions are modified to phosphoserine: Ser-655, Ser-657, Ser-710, and Ser-729. Lys-732 participates in a covalent cross-link: Glycyl lysine isopeptide (Lys-Gly) (interchain with G-Cter in SUMO2). Residues 744–754 (TQPQTSETQIS) are compositionally biased toward polar residues. Composition is skewed to basic and acidic residues over residues 757-767 (LESERTHHTVE) and 798-815 (NDERPEGGAEEEEKKESS). Ser-825 and Ser-838 each carry phosphoserine. Over residues 855–866 (TAATQKKPSISI) the composition is skewed to polar residues. Lys-861 carries the N6-acetyllysine; alternate modification. Lys-861 is covalently cross-linked (Glycyl lysine isopeptide (Lys-Gly) (interchain with G-Cter in SUMO2); alternate). Residue Lys-879 forms a Glycyl lysine isopeptide (Lys-Gly) (interchain with G-Cter in SUMO2) linkage. A compositionally biased stretch (basic and acidic residues) spans 892–915 (ADDSRISEDETERNGDDGTHDKGL). Residues 892 to 950 (ADDSRISEDETERNGDDGTHDKGLKICRTVTQVVPAEGQENGQREEEEEKEPEAELPAP) are disordered. Phosphoserine is present on residues Ser-895 and Ser-898. Acidic residues predominate over residues 936-945 (EEEEEKEPEA). Lys-969 is covalently cross-linked (Glycyl lysine isopeptide (Lys-Gly) (interchain with G-Cter in SUMO2)). Thr-975 bears the Phosphothreonine mark. A phosphoserine mark is found at Ser-986, Ser-989, and Ser-1003. Glycyl lysine isopeptide (Lys-Gly) (interchain with G-Cter in SUMO2) cross-links involve residues Lys-1046 and Lys-1106. Disordered stretches follow at residues 1104 to 1214 (ETKA…DDLF) and 1226 to 1338 (LPLT…GGRR). Over residues 1115 to 1129 (PLHPPPPPPVQPPPH) the composition is skewed to pro residues. Residues 1130-1174 (PRAEQREQERAVREQWAEREREMERRERTRSEREWDRDKVREGPR) are compositionally biased toward basic and acidic residues. The span at 1175–1192 (SRSRSRDRRRKERAKSKE) shows a compositional bias: basic residues. Ser-1179 carries the phosphoserine; by SRPK2 and PKB/AKT1 modification. 2 stretches are compositionally biased toward basic and acidic residues: residues 1193 to 1214 (KKSEKKEKAQEEPPAKLLDDLF) and 1236 to 1317 (KEAE…DRRD). Residues 1209-1236 (LLDDLFRKTKAAPCIYWLPLTESQIVQK) are sufficient for interaction with RNPS1 and SAP18 and formation of the ASAP complex.

As to quaternary structure, found in a mRNA splicing-dependent exon junction complex (EJC). Component of the heterotrimeric ASAP (apoptosis- and splicing-associated protein) complexes consisting of RNPS1, SAP18 and different isoforms of ACIN1; the association of SAP18 seems to require a preformed RNPS1:ACIN1 complex. Interacts with API5. Interacts with SRPK2 in a phosphorylation-dependent manner. Post-translationally, undergoes proteolytic cleavage; the processed form is active, contrary to the uncleaved form. In terms of processing, phosphorylation on Ser-1179 by SRPK2 up-regulates its stimulatory effect on cyclin A1.

Its subcellular location is the nucleus. The protein resides in the nucleus speckle. It localises to the nucleoplasm. Functionally, auxiliary component of the splicing-dependent multiprotein exon junction complex (EJC) deposited at splice junction on mRNAs. The EJC is a dynamic structure consisting of core proteins and several peripheral nuclear and cytoplasmic associated factors that join the complex only transiently either during EJC assembly or during subsequent mRNA metabolism. Component of the ASAP complexes which bind RNA in a sequence-independent manner and are proposed to be recruited to the EJC prior to or during the splicing process and to regulate specific excision of introns in specific transcription subsets; ACIN1 confers RNA-binding to the complex. The ASAP complex can inhibit RNA processing during in vitro splicing reactions. The ASAP complex promotes apoptosis and is disassembled after induction of apoptosis. Involved in the splicing modulation of BCL2L1/Bcl-X (and probably other apoptotic genes); specifically inhibits formation of proapoptotic isoforms such as Bcl-X(S); the activity is different from the established EJC assembly and function. Induces apoptotic chromatin condensation after activation by CASP3. Regulates cyclin A1, but not cyclin A2, expression in leukemia cells. The chain is Apoptotic chromatin condensation inducer in the nucleus (Acin1) from Mus musculus (Mouse).